Consider the following 278-residue polypeptide: Ribosomal RNA small subunit methyltransferase A (278 aa).

Residues asparagine 18, leucine 20, glycine 45, glutamate 66, aspartate 89, and asparagine 110 each coordinate S-adenosyl-L-methionine.

This sequence belongs to the class I-like SAM-binding methyltransferase superfamily. rRNA adenine N(6)-methyltransferase family. RsmA subfamily.

It is found in the cytoplasm. It catalyses the reaction adenosine(1518)/adenosine(1519) in 16S rRNA + 4 S-adenosyl-L-methionine = N(6)-dimethyladenosine(1518)/N(6)-dimethyladenosine(1519) in 16S rRNA + 4 S-adenosyl-L-homocysteine + 4 H(+). In terms of biological role, specifically dimethylates two adjacent adenosines (A1518 and A1519) in the loop of a conserved hairpin near the 3'-end of 16S rRNA in the 30S particle. May play a critical role in biogenesis of 30S subunits. The polypeptide is Ribosomal RNA small subunit methyltransferase A (Cupriavidus pinatubonensis (strain JMP 134 / LMG 1197) (Cupriavidus necator (strain JMP 134))).